The following is a 328-amino-acid chain: Stress response kinase A (328 aa).

Asp-201 (proton acceptor) is an active-site residue. Mg(2+)-binding residues include Asn-206 and Asp-217. The active site involves Asp-217.

This sequence belongs to the SrkA/RdoA protein kinase family. Monomer. The cofactor is Mg(2+).

It localises to the cytoplasm. The enzyme catalyses L-seryl-[protein] + ATP = O-phospho-L-seryl-[protein] + ADP + H(+). The catalysed reaction is L-threonyl-[protein] + ATP = O-phospho-L-threonyl-[protein] + ADP + H(+). Functionally, a protein kinase that phosphorylates Ser and Thr residues. Probably acts to suppress the effects of stress linked to accumulation of reactive oxygen species. Probably involved in the extracytoplasmic stress response. This chain is Stress response kinase A, found in Escherichia coli O6:H1 (strain CFT073 / ATCC 700928 / UPEC).